Reading from the N-terminus, the 118-residue chain is Large ribosomal subunit protein bL20 (118 aa).

This sequence belongs to the bacterial ribosomal protein bL20 family.

Binds directly to 23S ribosomal RNA and is necessary for the in vitro assembly process of the 50S ribosomal subunit. It is not involved in the protein synthesizing functions of that subunit. The protein is Large ribosomal subunit protein bL20 of Staphylococcus aureus (strain Mu3 / ATCC 700698).